We begin with the raw amino-acid sequence, 112 residues long: cAMP-regulated phosphoprotein 19 (112 aa).

Met-1 is subject to N-acetylmethionine. Residues 1-11 (MSAEVPEAASA) show a composition bias toward low complexity. The disordered stretch occupies residues 1–49 (MSAEVPEAASAEEQKEMEDKVTSPEKAEEAKLKARYPHLGQKPGGSDFL). Residue Ser-2 is modified to N-acetylserine. A phosphoserine mark is found at Ser-2 and Ser-23. Residues 12 to 32 (EEQKEMEDKVTSPEKAEEAKL) are compositionally biased toward basic and acidic residues. Phosphoserine; by GWL occurs at positions 62 and 104. Residues 73-112 (KNKQLPTAAPDKTEVTGDHIPTPQDLPQRKPSLVASKLAG) form a disordered region. Residue Ser-104 is modified to Phosphoserine; by PKA. Lys-109 is modified (N6-acetyllysine).

Belongs to the endosulfine family. As to quaternary structure, interacts (when phosphorylated at Ser-62) with PPP2R2D. Interacts with SNCA. Interacts with PPP2R2A; the interaction is direct and this interaction inhibits PP2A activity. Post-translationally, phosphorylation at Ser-62 by MASTL/GWL during mitosis is essential for interaction with PPP2R2D (PR55-delta) and subsequent inactivation of PP2A. Phosphorylated by PKA.

The protein resides in the cytoplasm. In terms of biological role, protein phosphatase inhibitor that specifically inhibits protein phosphatase 2A (PP2A) during mitosis. Inhibition of PP2A is enhanced when ARPP19 is phosphorylated. When phosphorylated at Ser-62 during mitosis, specifically interacts with PPP2R2D (PR55-delta) and inhibits its activity, leading to inactivation of PP2A, an essential condition to keep cyclin-B1-CDK1 activity high during M phase. May indirectly enhance GAP-43 expression. The chain is cAMP-regulated phosphoprotein 19 (ARPP19) from Homo sapiens (Human).